We begin with the raw amino-acid sequence, 300 residues long: uncharacterized protein (300 aa).

4 consecutive CBS domains span residues 10-68, 88-148, 152-207, and 226-284; these read RFPP…FRDV, FLKY…HVKV, MTSE…EDVL, and ISSK…GVEI.

This is an uncharacterized protein from Thermofilum pendens.